The sequence spans 104 residues: ATP-dependent Clp protease adapter protein ClpS (104 aa).

Belongs to the ClpS family. Binds to the N-terminal domain of the chaperone ClpA.

In terms of biological role, involved in the modulation of the specificity of the ClpAP-mediated ATP-dependent protein degradation. This is ATP-dependent Clp protease adapter protein ClpS from Nitratidesulfovibrio vulgaris (strain ATCC 29579 / DSM 644 / CCUG 34227 / NCIMB 8303 / VKM B-1760 / Hildenborough) (Desulfovibrio vulgaris).